The primary structure comprises 400 residues: Na(+)/H(+) antiporter NhaA (400 aa).

11 helical membrane passes run 9–29 (FLVS…IAMV), 60–80 (LILW…GLEL), 96–116 (VLPA…FYLF), 127–147 (WAIP…ILGA), 155–175 (IFLV…MAIF), 180–200 (LSLI…ALNL), 210–230 (LILG…ATLA), 263–283 (YFVL…GIGL), 294–314 (VILG…FVAI), 327–347 (WISF…SLFI), and 366–386 (VLIA…IASV).

The protein belongs to the NhaA Na(+)/H(+) (TC 2.A.33) antiporter family.

The protein localises to the cell inner membrane. The enzyme catalyses Na(+)(in) + 2 H(+)(out) = Na(+)(out) + 2 H(+)(in). Functionally, na(+)/H(+) antiporter that extrudes sodium in exchange for external protons. The chain is Na(+)/H(+) antiporter NhaA from Campylobacter curvus (strain 525.92).